Consider the following 103-residue polypeptide: Large ribosomal subunit protein uL23c (103 aa).

Belongs to the universal ribosomal protein uL23 family. Part of the 50S ribosomal subunit.

The protein localises to the plastid. The protein resides in the chloroplast. Functionally, binds to 23S rRNA. The protein is Large ribosomal subunit protein uL23c (rpl23) of Gracilaria tenuistipitata var. liui (Red alga).